Consider the following 313-residue polypeptide: Malate dehydrogenase (313 aa).

NAD(+) contacts are provided by residues 8-13 (GAGNVG) and Asp-33. Residues Arg-83 and Arg-89 each coordinate substrate. Residues Asn-96 and 119 to 121 (ISN) contribute to the NAD(+) site. Positions 121 and 152 each coordinate substrate. His-176 functions as the Proton acceptor in the catalytic mechanism.

Belongs to the LDH/MDH superfamily. MDH type 3 family.

The enzyme catalyses (S)-malate + NAD(+) = oxaloacetate + NADH + H(+). Its function is as follows. Catalyzes the reversible oxidation of malate to oxaloacetate. The chain is Malate dehydrogenase from Bacteroides fragilis (strain ATCC 25285 / DSM 2151 / CCUG 4856 / JCM 11019 / LMG 10263 / NCTC 9343 / Onslow / VPI 2553 / EN-2).